The following is a 117-amino-acid chain: Large ribosomal subunit protein bL20 (117 aa).

The protein belongs to the bacterial ribosomal protein bL20 family.

In terms of biological role, binds directly to 23S ribosomal RNA and is necessary for the in vitro assembly process of the 50S ribosomal subunit. It is not involved in the protein synthesizing functions of that subunit. The sequence is that of Large ribosomal subunit protein bL20 from Rickettsia bellii (strain OSU 85-389).